We begin with the raw amino-acid sequence, 432 residues long: Short/branched chain specific acyl-CoA dehydrogenase, mitochondrial (432 aa).

A mitochondrion-targeting transit peptide spans 1-33 (MEGLAVRLLRGSRLLRRNFPTCLSSWKIPPHVS). Lys-70 is modified (N6-acetyllysine; alternate). The residue at position 70 (Lys-70) is an N6-succinyllysine; alternate. Residues 174–183 (FCLSEAGAGS) and 207–209 (WIS) contribute to the FAD site. Residue Ser-183 participates in substrate binding. Ser-183 carries the post-translational modification Phosphoserine. Substrate contacts are provided by Tyr-229 and Tyr-283. Position 284 is an N6-acetyllysine; alternate (Lys-284). Position 284 is an N6-succinyllysine; alternate (Lys-284). Position 291 to 294 (291 to 294 (NEGR)) interacts with substrate. Residues Arg-319, Gln-330, and 387-391 (EWMGG) each bind FAD. The Proton acceptor role is filled by Glu-414. 416 to 418 (ASN) provides a ligand contact to FAD. Lys-426 carries the N6-acetyllysine modification.

Belongs to the acyl-CoA dehydrogenase family. Homotetramer. It depends on FAD as a cofactor.

It localises to the mitochondrion matrix. It catalyses the reaction 2-methylbutanoyl-CoA + oxidized [electron-transfer flavoprotein] + H(+) = (2E)-2-methylbut-2-enoyl-CoA + reduced [electron-transfer flavoprotein]. It carries out the reaction (2S)-2-methylbutanoyl-CoA + oxidized [electron-transfer flavoprotein] + H(+) = (2E)-2-methylbut-2-enoyl-CoA + reduced [electron-transfer flavoprotein]. The catalysed reaction is (2R)-2-methylbutanoyl-CoA + oxidized [electron-transfer flavoprotein] + H(+) = ethylacryloyl-CoA + reduced [electron-transfer flavoprotein]. The enzyme catalyses butanoyl-CoA + oxidized [electron-transfer flavoprotein] + H(+) = (2E)-butenoyl-CoA + reduced [electron-transfer flavoprotein]. It catalyses the reaction 2-methylpropanoyl-CoA + oxidized [electron-transfer flavoprotein] + H(+) = 2-methylpropenoyl-CoA + reduced [electron-transfer flavoprotein]. It carries out the reaction hexanoyl-CoA + oxidized [electron-transfer flavoprotein] + H(+) = (2E)-hexenoyl-CoA + reduced [electron-transfer flavoprotein]. The catalysed reaction is valproyl-CoA + oxidized [electron-transfer flavoprotein] + H(+) = (2E)-2-propylpent-2-enoyl-CoA + reduced [electron-transfer flavoprotein]. The protein operates within lipid metabolism; mitochondrial fatty acid beta-oxidation. Its pathway is amino-acid degradation; L-isoleucine degradation. Functionally, short and branched chain specific acyl-CoA dehydrogenase that catalyzes the removal of one hydrogen from C-2 and C-3 of the fatty acyl-CoA thioester, resulting in the formation of trans-2-enoyl-CoA. Among the different mitochondrial acyl-CoA dehydrogenases, acts specifically on short and branched chain acyl-CoA derivatives such as (S)-2-methylbutyryl-CoA as well as short straight chain acyl-CoAs such as butyryl-CoA. Plays an important role in the metabolism of L-isoleucine by catalyzing the dehydrogenation of 2-methylbutyryl-CoA, one of the steps of the L-isoleucine catabolic pathway. Can also act on valproyl-CoA, a metabolite of the valproic acid drug. This is Short/branched chain specific acyl-CoA dehydrogenase, mitochondrial (ACADSB) from Pongo abelii (Sumatran orangutan).